Here is a 469-residue protein sequence, read N- to C-terminus: Alpha-2C adrenergic receptor (469 aa).

The tract at residues 1–29 (MDLQLTTNSTDSGDRGGSSNESLQRQPPS) is disordered. Topologically, residues 1–36 (MDLQLTTNSTDSGDRGGSSNESLQRQPPSQYSPAEV) are extracellular. N8 and N20 each carry an N-linked (GlcNAc...) asparagine glycan. Residues 37 to 62 (AGLAAVVSFLIVFTIVGNVLVVIAVL) form a helical membrane-spanning segment. At 63 to 73 (TSRALKAPQNL) the chain is on the cytoplasmic side. A helical transmembrane segment spans residues 74–99 (FQVSLASADILVATLVMPFSLANELM). The Extracellular portion of the chain corresponds to 100–109 (NYWYFGKVWC). C109 and C187 are oxidised to a cystine. A helical transmembrane segment spans residues 110–132 (VIYLALDVLFCTSSIVHLCAISL). The Cytoplasmic segment spans residues 133-154 (DRYWSVTQAVEYNLKRTPRRIK). Residues 155–175 (GIIVTVWLISAVISFPPLISL) traverse the membrane as a helical segment. Residues 176–194 (YRDPEDDLYPQCELNDETW) lie on the Extracellular side of the membrane. Residues 195–216 (YILSSCIGSFFAPCIIMVLVYV) form a helical membrane-spanning segment. At 217-386 (RIYRVAKLRT…RKVTQAREKR (170 aa)) the chain is on the cytoplasmic side. 2 disordered regions span residues 232 to 261 (KRTV…AAAA) and 279 to 353 (HHHH…SRLS). Residues 279-296 (HHHHHLHHHHHHHHHQLR) are compositionally biased toward basic residues. The segment covering 301 to 310 (LEDIELEESS) has biased composition (acidic residues). Over residues 331 to 353 (RGFSFSFSSTKGGQSAGAGSRLS) the composition is skewed to low complexity. A helical membrane pass occupies residues 387-407 (FTFVLAVVMGVFVVCWFPFFF). The Extracellular portion of the chain corresponds to 408 to 427 (TYSLYGICREACQVPETLFK). A helical transmembrane segment spans residues 428–448 (FFFWIGYCNSSLNPVIYTIFN). Residues 449-469 (QDFRRSFKHILFKKKKKTSLQ) lie on the Cytoplasmic side of the membrane.

This sequence belongs to the G-protein coupled receptor 1 family. Adrenergic receptor subfamily. ADRA2C sub-subfamily.

It is found in the cell membrane. Functionally, alpha-2 adrenergic receptors mediate the catecholamine-induced inhibition of adenylate cyclase through the action of G proteins. The protein is Alpha-2C adrenergic receptor (ADRA2C) of Didelphis virginiana (North American opossum).